A 208-amino-acid chain; its full sequence is Ribosomal RNA large subunit methyltransferase E (208 aa).

The S-adenosyl-L-methionine site is built by G62, W64, D82, D98, and D123. The active-site Proton acceptor is K163.

It belongs to the class I-like SAM-binding methyltransferase superfamily. RNA methyltransferase RlmE family.

Its subcellular location is the cytoplasm. The catalysed reaction is uridine(2552) in 23S rRNA + S-adenosyl-L-methionine = 2'-O-methyluridine(2552) in 23S rRNA + S-adenosyl-L-homocysteine + H(+). Functionally, specifically methylates the uridine in position 2552 of 23S rRNA at the 2'-O position of the ribose in the fully assembled 50S ribosomal subunit. This chain is Ribosomal RNA large subunit methyltransferase E, found in Mannheimia succiniciproducens (strain KCTC 0769BP / MBEL55E).